The chain runs to 1408 residues: ABC multidrug transporter MDR1 (1408 aa).

A compositionally biased stretch (polar residues) spans 79 to 88 (IAASSDTLRN). A disordered region spans residues 79–102 (IAASSDTLRNSPLEKPISNAFSKS). Helical transmembrane passes span 147-167 (FAAPLEIIAMVLGLVLAVAAG) and 223-243 (LYLMAIGIGMFLATWLYMFIW). The region spanning 157–464 (VLGLVLAVAA…LAPELAAVTK (308 aa)) is the ABC transmembrane type-1 1 domain. The N-linked (GlcNAc...) asparagine glycan is linked to asparagine 244. A run of 4 helical transmembrane segments spans residues 296–316 (KVALVFQYAGTFVCGFVLAFV), 321–341 (LAGALVSILPVIMLCGGIMMT), 408–428 (IMFFVIYAAYALAFFYGGILV), and 436–456 (GIVINVFMSILIGSFSMAMLA). The ABC transporter 1 domain maps to 499–744 (ISFENVKFHY…ENGPYAQLVN (246 aa)). 534–541 (GASGSGKS) serves as a coordination point for ATP. An N-linked (GlcNAc...) asparagine glycan is attached at asparagine 606. 2 helical membrane passes run 838-858 (IIAFIAAICAGMVYPSLAILF) and 882-902 (LWYFITALAAAFVIFFQSAGF). Residues 838–1125 (IIAFIAAICA…VFTFVPDASK (288 aa)) form the ABC transmembrane type-1 2 domain. Asparagine 934 carries N-linked (GlcNAc...) asparagine glycosylation. 4 helical membrane passes run 952–972 (GLFGPTLGTVVQSCATLIGGC), 981–999 (LLALIGIACIPILVSGGYI), 1072–1092 (GLTFCIIALVFYIGALWIIDA), and 1099–1119 (FYTVLNSIVFASIQAGNVFTF). Asparagine 1127 and asparagine 1182 each carry an N-linked (GlcNAc...) asparagine glycan. An ABC transporter 2 domain is found at 1162–1402 (VRIEGVHFRY…KGGYYELVQM (241 aa)). An ATP-binding site is contributed by 1197–1204 (GPSGCGKS). An N-linked (GlcNAc...) asparagine glycan is attached at asparagine 1404.

This sequence belongs to the ABC transporter superfamily. ABCB family. Multidrug resistance exporter (TC 3.A.1.201) subfamily.

Its subcellular location is the cell membrane. The enzyme catalyses itraconazole(in) + ATP + H2O = itraconazole(out) + ADP + phosphate + H(+). It carries out the reaction voriconazole(in) + ATP + H2O = voriconazole(out) + ADP + phosphate + H(+). The catalysed reaction is fluconazole(in) + ATP + H2O = fluconazole(out) + ADP + phosphate + H(+). Functionally, pleiotropic ABC efflux transporter that confers resistance to structurally and functionally unrelated compounds including azoles such as fluconazole (FLC), itraconazole (ITC), posaconazole (POS), and voriconazole (VRC). The polypeptide is ABC multidrug transporter MDR1 (Cryptococcus neoformans var. grubii serotype A (strain H99 / ATCC 208821 / CBS 10515 / FGSC 9487) (Filobasidiella neoformans var. grubii)).